A 40-amino-acid polypeptide reads, in one-letter code: Photosystem II reaction center protein J (40 aa).

A helical transmembrane segment spans residues Ile-8 to Phe-28.

The protein belongs to the PsbJ family. As to quaternary structure, PSII is composed of 1 copy each of membrane proteins PsbA, PsbB, PsbC, PsbD, PsbE, PsbF, PsbH, PsbI, PsbJ, PsbK, PsbL, PsbM, PsbT, PsbX, PsbY, PsbZ, Psb30/Ycf12, at least 3 peripheral proteins of the oxygen-evolving complex and a large number of cofactors. It forms dimeric complexes.

The protein localises to the plastid. Its subcellular location is the chloroplast thylakoid membrane. In terms of biological role, one of the components of the core complex of photosystem II (PSII). PSII is a light-driven water:plastoquinone oxidoreductase that uses light energy to abstract electrons from H(2)O, generating O(2) and a proton gradient subsequently used for ATP formation. It consists of a core antenna complex that captures photons, and an electron transfer chain that converts photonic excitation into a charge separation. In Triticum aestivum (Wheat), this protein is Photosystem II reaction center protein J.